The sequence spans 211 residues: Glutathione S-transferase class-mu 28 kDa isozyme (211 aa).

Position 2 is an N-acetylalanine (Ala2). The region spanning Glu4–Gly86 is the GST N-terminal domain. Glutathione is bound by residues Tyr10, Tyr10–Phe11, Arg16, Trp41–Lys45, Leu53, Ala55–Val56, and Glu70–Ser71. The region spanning Thr88 to Phe211 is the GST C-terminal domain.

Belongs to the GST superfamily. Mu family. As to quaternary structure, homodimer. In terms of tissue distribution, in the adult, expressed in excretory epithelial cells but absent from the caecal epithelium and flame cells. Also expressed in the tegument and its extensions into the parenchyma. In the schistosomulum, expressed in the tegument and associated structures. Not expressed in digestive tract, reproductive organs or muscles (at protein level).

The catalysed reaction is RX + glutathione = an S-substituted glutathione + a halide anion + H(+). In terms of biological role, conjugation of reduced glutathione to a wide number of exogenous and endogenous hydrophobic electrophiles. GST isoenzymes appear to play a central role in the parasite detoxification system. Other functions are also suspected including a role in increasing the solubility of haematin in the parasite gut. This Schistosoma mansoni (Blood fluke) protein is Glutathione S-transferase class-mu 28 kDa isozyme (GST28).